A 402-amino-acid polypeptide reads, in one-letter code: Secondary metabolism regulator laeA (402 aa).

The interval 1–70 (MSLKYYLNDL…MSPTEVCSTD (70 aa)) is disordered. Over residues 11–21 (SDSDSESESEC) the composition is skewed to acidic residues.

Belongs to the methyltransferase superfamily. LaeA methyltransferase family.

It is found in the nucleus. The enzyme catalyses L-methionyl-[protein] + S-adenosyl-L-methionine = S-methyl-L-methionyl-[protein] + S-adenosyl-L-homocysteine. Its function is as follows. Methyltransferase that performs automethylation. No other methyl-accepting substrate has been identified yet. Acts as a global regulator for secondary metabolite gene expression. Negatively regulates the production of coprinoferrin, a structurally novel acylated tripeptide hydroxamate siderophore. This Coprinopsis cinerea (strain Okayama-7 / 130 / ATCC MYA-4618 / FGSC 9003) (Inky cap fungus) protein is Secondary metabolism regulator laeA.